Here is a 451-residue protein sequence, read N- to C-terminus: Phosphoglucosamine mutase (451 aa).

The active-site Phosphoserine intermediate is S102. Residues S102, D242, D244, and D246 each contribute to the Mg(2+) site. Position 102 is a phosphoserine (S102).

The protein belongs to the phosphohexose mutase family. The cofactor is Mg(2+). Post-translationally, activated by phosphorylation.

The catalysed reaction is alpha-D-glucosamine 1-phosphate = D-glucosamine 6-phosphate. In terms of biological role, catalyzes the conversion of glucosamine-6-phosphate to glucosamine-1-phosphate. This Staphylococcus epidermidis (strain ATCC 35984 / DSM 28319 / BCRC 17069 / CCUG 31568 / BM 3577 / RP62A) protein is Phosphoglucosamine mutase.